A 146-amino-acid polypeptide reads, in one-letter code: Lysozyme-like protein 4 (146 aa).

The signal sequence occupies residues 1–19; it reads MKASVVLSLLGYLVVPSGA. A C-type lysozyme domain is found at 20–146; it reads YILGRCTVAK…LARWLDGCKL (127 aa). Disulfide bonds link Cys-25-Cys-144, Cys-49-Cys-131, Cys-84-Cys-96, and Cys-92-Cys-110. Glu-54 is an active-site residue.

The protein belongs to the glycosyl hydrolase 22 family. In terms of assembly, monomer. Expressed in testis and epididymis.

Its subcellular location is the secreted. It localises to the cytoplasmic vesicle. It is found in the secretory vesicle. The protein resides in the acrosome. The protein localises to the cell projection. Its subcellular location is the cilium. It localises to the flagellum. Its function is as follows. May be involved in fertilization. Has no detectable bacteriolytic and lysozyme activities in vitro. The protein is Lysozyme-like protein 4 (LYZL4) of Homo sapiens (Human).